A 266-amino-acid polypeptide reads, in one-letter code: 3-methyl-2-oxobutanoate hydroxymethyltransferase (266 aa).

Mg(2+)-binding residues include Asp43 and Asp82. 3-methyl-2-oxobutanoate is bound by residues 43–44 (DS), Asp82, and Lys110. Residue Glu112 coordinates Mg(2+). The Proton acceptor role is filled by Glu179.

It belongs to the PanB family. In terms of assembly, homodecamer; pentamer of dimers. It depends on Mg(2+) as a cofactor.

Its subcellular location is the cytoplasm. It carries out the reaction 3-methyl-2-oxobutanoate + (6R)-5,10-methylene-5,6,7,8-tetrahydrofolate + H2O = 2-dehydropantoate + (6S)-5,6,7,8-tetrahydrofolate. It functions in the pathway cofactor biosynthesis; (R)-pantothenate biosynthesis; (R)-pantoate from 3-methyl-2-oxobutanoate: step 1/2. In terms of biological role, catalyzes the reversible reaction in which hydroxymethyl group from 5,10-methylenetetrahydrofolate is transferred onto alpha-ketoisovalerate to form ketopantoate. The chain is 3-methyl-2-oxobutanoate hydroxymethyltransferase from Psychrobacter arcticus (strain DSM 17307 / VKM B-2377 / 273-4).